The following is a 185-amino-acid chain: Ribosome-recycling factor (185 aa).

This sequence belongs to the RRF family.

Its subcellular location is the cytoplasm. Functionally, responsible for the release of ribosomes from messenger RNA at the termination of protein biosynthesis. May increase the efficiency of translation by recycling ribosomes from one round of translation to another. The chain is Ribosome-recycling factor from Pseudomonas fluorescens (strain Pf0-1).